The sequence spans 447 residues: MAGATEGEDTKVIESKINELNIDKPKLEDNNEAKGNGNGNESGGDDDDDKEDDDDNDEITEPSTSTSSGDKKKKKNKNKKKKKKKIVSIDSSYPEGIFPEGQWMEYPLEDINSYRTTSEEKRYLDRQQNNKWQDFRKGAEIHRRVRHKAQSSIRPGMTMIEIANLIEDSVRNYSGNDHTLKAGIGFPTGLSLNHVAAHYTPNTGDKLILKKDDIMKVDIGVHVNGRICDSAFTMTFNEDGKYDTIMQAVKEATYTGIKESGIDVRLNDIGAAIQEVMESYEMEENGKTYPIKCIKNLNGHNIDDFVIHSGKSVPIIANGDMTKMEEGETFAIETFGSTGNGYVLPEGECSHYAMNKGVEHLKPPSERSKQLLETIKQNFGTLPWCRRYLERTGEEKYLFALNQLVRHGIVEEYPPIVDKRGSYTAQFEHTILLHPHKKEVVTKGDDY.

Residues Met1–Ile86 are disordered. Positions Glu8 to Glu32 are enriched in basic and acidic residues. Over residues Gly43–Thr60 the composition is skewed to acidic residues. Residues Lys71 to Ile86 show a composition bias toward basic residues. His198 provides a ligand contact to substrate. The a divalent metal cation site is built by Asp218, Asp229, and His300. His308 serves as a coordination point for substrate. Glu333 and Glu428 together coordinate a divalent metal cation.

Belongs to the peptidase M24A family. Methionine aminopeptidase eukaryotic type 2 subfamily. Requires Co(2+) as cofactor. Zn(2+) serves as cofactor. The cofactor is Mn(2+). It depends on Fe(2+) as a cofactor.

The protein resides in the cytoplasm. It catalyses the reaction Release of N-terminal amino acids, preferentially methionine, from peptides and arylamides.. Cotranslationally removes the N-terminal methionine from nascent proteins. The N-terminal methionine is often cleaved when the second residue in the primary sequence is small and uncharged (Met-Ala-, Cys, Gly, Pro, Ser, Thr, or Val). The protein is Methionine aminopeptidase 2 of Candida albicans (strain WO-1) (Yeast).